The sequence spans 589 residues: Protein PAF1 homolog (589 aa).

Pro residues predominate over residues 1–54 (MASYRPPYPPLPQPPSQNSLAPPPPPPSLPPPVPPPPPSHQPYSYPPPPPPPPH). Disordered stretches follow at residues 1–180 (MASY…PLLT) and 542–589 (GVYS…DYSE). Residues 55 to 65 (AYYQQGPHYPQ) are compositionally biased toward low complexity. Positions 71–87 (APPPPPPPSAPPPLVPD) are enriched in pro residues. The span at 88-116 (PPRHQGPNDHEKGASKQVGRRERAKPDPS) shows a compositional bias: basic and acidic residues. Residues 117 to 127 (KHHHRSHLPHS) show a composition bias toward basic residues. Positions 126–159 (HSKKIETEEERRLRKKRELEKQRQDEKHRQQMKN) form a coiled coil. Positions 128–154 (KKIETEEERRLRKKRELEKQRQDEKHR) are enriched in basic and acidic residues.

Belongs to the PAF1 family. As to quaternary structure, component of the nuclear PAF1 complex (PAF1C), which consists of VIP2/ELF7/PAF1, VIP3/SKI8/WDR61, VIP4/LEO1, VIP5/RTF1, VIP6/ELF8/CTR9 and CDC73. As to expression, expressed in roots, leaves and shoot apex.

The protein resides in the nucleus. Its function is as follows. Component of the PAF1 complex (PAF1C) which is involved in histone modifications such as methylation on histone H3 'Lys-4' (H3K4me3). Involved in regulation of flowering time. Required for the expression of the flowering repressors and MAD-box genes FLC, AGL27/FLM and AGL31/MAF2. Required for histone H3 trimethylation on 'Lys-4' H3K4me3 at the FLC and AGL27/FLM loci. Involved in the control of seed dormancy and germination. This chain is Protein PAF1 homolog, found in Arabidopsis thaliana (Mouse-ear cress).